Consider the following 139-residue polypeptide: Putative general secretion pathway protein B (139 aa).

A helical transmembrane segment spans residues I28–G48. The tract at residues V93–R139 is disordered. Acidic residues predominate over residues S110 to E121. The span at E122–R139 shows a compositional bias: basic and acidic residues.

Its subcellular location is the cell membrane. Its function is as follows. Part of a cryptic operon that encodes proteins involved in type II secretion pathway in other organisms, but is not expressed in strain K12 under standard laboratory conditions. May play a regulatory role under conditions of derepressed gsp gene expression. This Escherichia coli (strain K12) protein is Putative general secretion pathway protein B.